Here is an 828-residue protein sequence, read N- to C-terminus: Cadherin-22 (828 aa).

The N-terminal stretch at 1–34 is a signal peptide; it reads MRPRPEGRGLRAGVALSPALLLLLLLPPPPTLLG. Residues 36 to 624 lie on the Extracellular side of the membrane; that stretch reads LWAAGTPSPS…AFVMAASLSP (589 aa). 5 Cadherin domains span residues 64–168, 169–277, 278–394, 395–498, and 499–616; these read WVWN…EPRF, LHGP…PPRF, PQKM…PPEF, RPPS…NPPE, and LATP…TTAF. An N-linked (GlcNAc...) asparagine glycan is attached at asparagine 162. 2 N-linked (GlcNAc...) asparagine glycosylation sites follow: asparagine 466 and asparagine 612. Residues 625-645 form a helical membrane-spanning segment; it reads GALIALLVCVLILVVLVLLIL. Over 646 to 828 the chain is Cytoplasmic; that stretch reads TLRRHHKSHL…HRGDDEAQAS (183 aa). A compositionally biased stretch (gly residues) spans 702–719; the sequence is GGGSAGGGAGGGSGGGAG. The interval 702-745 is disordered; the sequence is GGGSAGGGAGGGSGGGAGSPPQAHLPSERHSLPQGPPSPEPDFS.

The protein resides in the cell membrane. Cadherins are calcium-dependent cell adhesion proteins. They preferentially interact with themselves in a homophilic manner in connecting cells; cadherins may thus contribute to the sorting of heterogeneous cell types. PB-cadherins may have a role in the morphological organization of pituitary gland and brain tissues. The polypeptide is Cadherin-22 (CDH22) (Homo sapiens (Human)).